The primary structure comprises 266 residues: Small ribosomal subunit protein uS3m (266 aa).

Belongs to the universal ribosomal protein uS3 family.

It localises to the mitochondrion. This Mycosarcoma maydis (Corn smut fungus) protein is Small ribosomal subunit protein uS3m (MRPS3).